We begin with the raw amino-acid sequence, 336 residues long: MSTSSEPYLEPLRLFLNKECIWRKTGKGAKHREYRCLSSSSPWSILPHQAARRVWKYEINIIIVKKRNDDYIISMAIEGLHYQQILCPKVLTQLFFILHSHGGTKFYKLTFDPFKPMNAELAVPLYDTTPLPHMTMQGLSVYDHCSVVGKPICAQVAGSITQIGTCGVWAVTTGAQTNIVCFALRYDLAVCISDPKVFPSMARCMASAVGCAQETCSYCTGHNKHVEVFDVNGDYGKNKELCFCSTPCGDWDFRDESMKPLFSKNDDMVGIRVREPPNSENTIFSKASAYFYGITRDGKEVDLSDENFILLKIDPRLSHMIIVACPILKRMCMIKS.

Belongs to the herpesviridae cytoplasmic envelopment protein 2 family. In terms of assembly, interacts with cytoplasmic envelopment protein 3 and with the capsid.

The protein resides in the virion tegument. Its subcellular location is the host cytoplasm. The protein localises to the host nucleus. Plays a critical role in cytoplasmic virus egress. Participates in the final step of tegumentation and envelope acquisition within the host cytoplasm by directly interacting with the capsid. Upon virion binding to target cell, a signaling cascade is triggered to disrupt the interaction with the capsid, thereby preparing capsid uncoating. The sequence is that of Cytoplasmic envelopment protein 2 from Elephantid herpesvirus 1 (isolate Asian elephant/Berlin/Kiba/1998) (EIHV-1).